The primary structure comprises 173 residues: Crossover junction endodeoxyribonuclease RuvC (173 aa).

Active-site residues include aspartate 8, glutamate 67, and aspartate 139. Aspartate 8, glutamate 67, and aspartate 139 together coordinate Mg(2+).

The protein belongs to the RuvC family. As to quaternary structure, homodimer which binds Holliday junction (HJ) DNA. The HJ becomes 2-fold symmetrical on binding to RuvC with unstacked arms; it has a different conformation from HJ DNA in complex with RuvA. In the full resolvosome a probable DNA-RuvA(4)-RuvB(12)-RuvC(2) complex forms which resolves the HJ. It depends on Mg(2+) as a cofactor.

The protein localises to the cytoplasm. The catalysed reaction is Endonucleolytic cleavage at a junction such as a reciprocal single-stranded crossover between two homologous DNA duplexes (Holliday junction).. The RuvA-RuvB-RuvC complex processes Holliday junction (HJ) DNA during genetic recombination and DNA repair. Endonuclease that resolves HJ intermediates. Cleaves cruciform DNA by making single-stranded nicks across the HJ at symmetrical positions within the homologous arms, yielding a 5'-phosphate and a 3'-hydroxyl group; requires a central core of homology in the junction. The consensus cleavage sequence is 5'-(A/T)TT(C/G)-3'. Cleavage occurs on the 3'-side of the TT dinucleotide at the point of strand exchange. HJ branch migration catalyzed by RuvA-RuvB allows RuvC to scan DNA until it finds its consensus sequence, where it cleaves and resolves the cruciform DNA. This is Crossover junction endodeoxyribonuclease RuvC from Psychromonas ingrahamii (strain DSM 17664 / CCUG 51855 / 37).